The chain runs to 212 residues: Probable nicotinate-nucleotide adenylyltransferase (212 aa).

The protein belongs to the NadD family.

The enzyme catalyses nicotinate beta-D-ribonucleotide + ATP + H(+) = deamido-NAD(+) + diphosphate. It participates in cofactor biosynthesis; NAD(+) biosynthesis; deamido-NAD(+) from nicotinate D-ribonucleotide: step 1/1. Its function is as follows. Catalyzes the reversible adenylation of nicotinate mononucleotide (NaMN) to nicotinic acid adenine dinucleotide (NaAD). This is Probable nicotinate-nucleotide adenylyltransferase from Shewanella sp. (strain ANA-3).